The sequence spans 618 residues: 1-deoxy-D-xylulose-5-phosphate synthase (618 aa).

Residues H70 and 111–113 contribute to the thiamine diphosphate site; that span reads GHS. D142 lines the Mg(2+) pocket. Thiamine diphosphate is bound by residues 143 to 144, N171, Y278, and E360; that span reads GS. Position 171 (N171) interacts with Mg(2+).

This sequence belongs to the transketolase family. DXPS subfamily. In terms of assembly, homodimer. Mg(2+) is required as a cofactor. It depends on thiamine diphosphate as a cofactor.

The catalysed reaction is D-glyceraldehyde 3-phosphate + pyruvate + H(+) = 1-deoxy-D-xylulose 5-phosphate + CO2. It functions in the pathway metabolic intermediate biosynthesis; 1-deoxy-D-xylulose 5-phosphate biosynthesis; 1-deoxy-D-xylulose 5-phosphate from D-glyceraldehyde 3-phosphate and pyruvate: step 1/1. Its function is as follows. Catalyzes the acyloin condensation reaction between C atoms 2 and 3 of pyruvate and glyceraldehyde 3-phosphate to yield 1-deoxy-D-xylulose-5-phosphate (DXP). The polypeptide is 1-deoxy-D-xylulose-5-phosphate synthase (Helicobacter pylori (strain ATCC 700392 / 26695) (Campylobacter pylori)).